The following is a 756-amino-acid chain: ATP-dependent DNA helicase Hel308 (756 aa).

ATP is bound by residues Q29 and 47–54 (SATASGKT). In terms of domain architecture, Helicase ATP-binding spans 34-201 (RAGLLNGENI…WLNAKLVKSD (168 aa)). The DEAH box signature appears at 146 to 149 (DEIH). The region spanning 233–435 (SLINLTVDTL…PTSLKFHTLS (203 aa)) is the Helicase C-terminal domain.

It belongs to the helicase family. Hel308 subfamily. In terms of assembly, monomer.

The enzyme catalyses Couples ATP hydrolysis with the unwinding of duplex DNA by translocating in the 3'-5' direction.. It carries out the reaction ATP + H2O = ADP + phosphate + H(+). In terms of biological role, DNA-dependent ATPase and 3'-5' DNA helicase that may be involved in repair of stalled replication forks. This Caldivirga maquilingensis (strain ATCC 700844 / DSM 13496 / JCM 10307 / IC-167) protein is ATP-dependent DNA helicase Hel308.